We begin with the raw amino-acid sequence, 55 residues long: Large ribosomal subunit protein bL33 (55 aa).

This sequence belongs to the bacterial ribosomal protein bL33 family.

The sequence is that of Large ribosomal subunit protein bL33 from Jannaschia sp. (strain CCS1).